The following is a 282-amino-acid chain: Phosphate transport system permease protein PstA (282 aa).

A run of 6 helical transmembrane segments spans residues 22-42 (LSYI…FTLI), 71-91 (LIGS…IGVL), 111-131 (FLND…VYSL), 136-156 (IEHF…IPIV), 198-218 (ILTG…PLLF), and 254-274 (NLAW…NIFT). One can recognise an ABC transmembrane type-1 domain in the interval 71 to 274 (LIGSFFIVGA…LFVLCLNIFT (204 aa)).

Belongs to the binding-protein-dependent transport system permease family. CysTW subfamily.

The protein resides in the cell inner membrane. In terms of biological role, part of the binding-protein-dependent transport system for phosphate; probably responsible for the translocation of the substrate across the membrane. This Haemophilus influenzae (strain ATCC 51907 / DSM 11121 / KW20 / Rd) protein is Phosphate transport system permease protein PstA (pstA).